The following is a 283-amino-acid chain: Pantothenate synthetase (283 aa).

ATP is bound at residue 30 to 37 (MGFLHEGH). His37 (proton donor) is an active-site residue. Residue Gln61 coordinates (R)-pantoate. A beta-alanine-binding site is contributed by Gln61. An ATP-binding site is contributed by 147-150 (GKKD). Position 153 (Gln153) interacts with (R)-pantoate. Residues Val176 and 184-187 (MSSR) contribute to the ATP site.

Belongs to the pantothenate synthetase family. Homodimer.

The protein localises to the cytoplasm. The enzyme catalyses (R)-pantoate + beta-alanine + ATP = (R)-pantothenate + AMP + diphosphate + H(+). It functions in the pathway cofactor biosynthesis; (R)-pantothenate biosynthesis; (R)-pantothenate from (R)-pantoate and beta-alanine: step 1/1. Functionally, catalyzes the condensation of pantoate with beta-alanine in an ATP-dependent reaction via a pantoyl-adenylate intermediate. This is Pantothenate synthetase from Trichlorobacter lovleyi (strain ATCC BAA-1151 / DSM 17278 / SZ) (Geobacter lovleyi).